A 503-amino-acid polypeptide reads, in one-letter code: Cysteine--tRNA ligase (503 aa).

Zn(2+) is bound at residue Cys-31. The short motif at Pro-33–Asn-43 is the 'HIGH' region element. Zn(2+) contacts are provided by Cys-225, His-264, and Glu-268. Residues Lys-297 to Ser-301 carry the 'KMSKS' region motif. Residue Lys-300 participates in ATP binding.

The protein belongs to the class-I aminoacyl-tRNA synthetase family. As to quaternary structure, monomer. The cofactor is Zn(2+).

The protein resides in the cytoplasm. The catalysed reaction is tRNA(Cys) + L-cysteine + ATP = L-cysteinyl-tRNA(Cys) + AMP + diphosphate. This chain is Cysteine--tRNA ligase, found in Bartonella tribocorum (strain CIP 105476 / IBS 506).